The sequence spans 187 residues: Keratin-associated protein 5-8 (187 aa).

9 consecutive repeat copies span residues 28–31 (CCVP), 34–37 (CCKP), 40–43 (CCVP), 109–112 (CCKP), 119–122 (CCKP), 138–141 (CCKP), 148–151 (CCKP), 167–170 (CCKP), and 177–180 (CCVP). Residues 28–180 (CCVPICCCKP…CCSQSSCCVP (153 aa)) are 9 X 4 AA repeats of C-C-X-P.

This sequence belongs to the KRTAP type 5 family. In terms of tissue distribution, restricted to hair root, not detected in any other tissues. Expressed in cuticle layers of differentiating hair follicles.

Its function is as follows. In the hair cortex, hair keratin intermediate filaments are embedded in an interfilamentous matrix, consisting of hair keratin-associated protein (KRTAP), which are essential for the formation of a rigid and resistant hair shaft through their extensive disulfide bond cross-linking with abundant cysteine residues of hair keratins. The matrix proteins include the high-sulfur and high-glycine-tyrosine keratins. This is Keratin-associated protein 5-8 (KRTAP5-8) from Homo sapiens (Human).